Consider the following 288-residue polypeptide: MKLIVVSGRSGSGKTVALRVLEDLGYYCVDNLPVSLLFQLVAELRGKYDQIAVSIDVRNLPATAEDLVSILDEIRQHQDLQFSSFFFDADNATLLKRYGESRRLHPLSRQQFTLAQAIRQETDLLSPLSSSADLRIDTSHISIHELSEQIRERVLGKKEHELVMVFESFGFKHGIAKDADFVFDARFLPNPHWIAELKPLTGLDEPVQRYLQSQPDVVKYINQLISLLETWLPQLERNNRSYVTVAIGCTGGQHRSVFIAEQLANHFLVLGKNVQRRHRTLEKLHAPG.

8-15 (GRSGSGKT) contributes to the ATP binding site. 56-59 (DVRN) is a binding site for GTP.

Belongs to the RapZ-like family.

Displays ATPase and GTPase activities. The sequence is that of Nucleotide-binding protein Tola_2941 from Tolumonas auensis (strain DSM 9187 / NBRC 110442 / TA 4).